The following is a 434-amino-acid chain: DNA primase DnaG (434 aa).

Positions 171 to 250 constitute a Toprim domain; it reads DAIIIVEGRA…AFSPRRRSVE (80 aa). Mg(2+) contacts are provided by glutamate 177, aspartate 219, and aspartate 221. The segment at 290-319 is disordered; it reads GEEEHSSVSQKEEGNNTTPDVPADLPEEPP. Basic and acidic residues predominate over residues 292-303; sequence EEHSSVSQKEEG.

The protein belongs to the archaeal DnaG primase family. In terms of assembly, forms a ternary complex with MCM helicase and DNA. Requires Mg(2+) as cofactor.

It catalyses the reaction ssDNA + n NTP = ssDNA/pppN(pN)n-1 hybrid + (n-1) diphosphate.. RNA polymerase that catalyzes the synthesis of short RNA molecules used as primers for DNA polymerase during DNA replication. In Methanocorpusculum labreanum (strain ATCC 43576 / DSM 4855 / Z), this protein is DNA primase DnaG.